The following is a 622-amino-acid chain: Low affinity potassium transport system protein Kup (622 aa).

Transmembrane regions (helical) follow at residues L9–L29, V49–L69, V103–I123, P137–I157, V165–L185, V213–A233, W247–L267, P276–A296, I337–F357, L363–T383, F396–L416, and L419–T439.

This sequence belongs to the HAK/KUP transporter (TC 2.A.72) family.

It is found in the cell inner membrane. The catalysed reaction is K(+)(in) + H(+)(in) = K(+)(out) + H(+)(out). Responsible for the low-affinity transport of potassium into the cell. Likely operates as a K(+):H(+) symporter. The polypeptide is Low affinity potassium transport system protein Kup (Shigella sonnei (strain Ss046)).